We begin with the raw amino-acid sequence, 211 residues long: UPF0502 protein PC1_1804 (211 aa).

The tract at residues 168–188 (SGDASDAAPEEEGAGDNSHQL) is disordered.

It belongs to the UPF0502 family.

The sequence is that of UPF0502 protein PC1_1804 from Pectobacterium carotovorum subsp. carotovorum (strain PC1).